Consider the following 953-residue polypeptide: ALS2 C-terminal-like protein (953 aa).

8 MORN repeats span residues 358 to 380, 381 to 403, 409 to 431, 432 to 452, 459 to 479, 483 to 505, 506 to 528, and 529 to 552; these read YEGE…DGRN, HVGN…QASE, YKCH…TDEV, YKGY…SGPQ, YTGH…DGDR, YIGM…AGVC, YQGT…DDSL, and YEGT…NGFT. The region spanning 796 to 942 is the VPS9 domain; that stretch reads LFPDTQLLEF…IQKEDMRLHR (147 aa).

In terms of assembly, homodimer. Forms a heteromeric complex with ALS2. Interacts with ALS2 and RAB5A. In terms of tissue distribution, expressed in heart and kidney.

The protein resides in the cytoplasm. Functionally, acts as a guanine nucleotide exchange factor (GEF) for Rab5 GTPase. Regulates the ALS2-mediated endosome dynamics. The sequence is that of ALS2 C-terminal-like protein (ALS2CL) from Homo sapiens (Human).